The sequence spans 247 residues: ATP synthase subunit a, chloroplastic (247 aa).

The next 5 membrane-spanning stretches (helical) occupy residues 28 to 48, 95 to 115, 134 to 154, 199 to 219, and 220 to 240; these read GQVL…CLLG, VPFL…GALI, INTT…AGIS, LVVG…IMLL, and GLFT…AYIG.

This sequence belongs to the ATPase A chain family. F-type ATPases have 2 components, CF(1) - the catalytic core - and CF(0) - the membrane proton channel. CF(1) has five subunits: alpha(3), beta(3), gamma(1), delta(1), epsilon(1). CF(0) has four main subunits: a, b, b' and c.

The protein resides in the plastid. The protein localises to the chloroplast thylakoid membrane. Functionally, key component of the proton channel; it plays a direct role in the translocation of protons across the membrane. The protein is ATP synthase subunit a, chloroplastic of Chlorella vulgaris (Green alga).